A 261-amino-acid polypeptide reads, in one-letter code: Glucose 1-dehydrogenase (261 aa).

11–35 (VITGSSTGLGKSMAIRFATEKAKVV) contributes to the NADP(+) binding site. Serine 145 lines the substrate pocket. Tyrosine 158 acts as the Proton acceptor in catalysis.

Belongs to the short-chain dehydrogenases/reductases (SDR) family. In terms of assembly, homotetramer.

The enzyme catalyses D-glucose + NAD(+) = D-glucono-1,5-lactone + NADH + H(+). It catalyses the reaction D-glucose + NADP(+) = D-glucono-1,5-lactone + NADPH + H(+). This chain is Glucose 1-dehydrogenase, found in Priestia megaterium (Bacillus megaterium).